A 309-amino-acid polypeptide reads, in one-letter code: Glutaminase (309 aa).

Substrate is bound by residues Ser-65, Asn-117, Glu-162, Asn-169, Tyr-193, Tyr-245, and Val-263.

The protein belongs to the glutaminase family. In terms of assembly, homotetramer.

The catalysed reaction is L-glutamine + H2O = L-glutamate + NH4(+). This chain is Glutaminase, found in Bacillus cereus (strain ATCC 10987 / NRS 248).